We begin with the raw amino-acid sequence, 106 residues long: ATP-dependent Clp protease adapter protein ClpS (106 aa).

This sequence belongs to the ClpS family. As to quaternary structure, binds to the N-terminal domain of the chaperone ClpA.

Involved in the modulation of the specificity of the ClpAP-mediated ATP-dependent protein degradation. The chain is ATP-dependent Clp protease adapter protein ClpS from Nocardia farcinica (strain IFM 10152).